Reading from the N-terminus, the 315-residue chain is Prephenate dehydratase (315 aa).

Residues 3–190 enclose the Prephenate dehydratase domain; that stretch reads RIAYLGPQGT…ARTRFVLVGR (188 aa). The ACT domain occupies 204-281; it reads SVALRLPNTP…EDVRYLGSWP (78 aa).

As to quaternary structure, homodimer.

It carries out the reaction prephenate + H(+) = 3-phenylpyruvate + CO2 + H2O. It functions in the pathway amino-acid biosynthesis; L-phenylalanine biosynthesis; phenylpyruvate from prephenate: step 1/1. In Mycobacterium sp. (strain KMS), this protein is Prephenate dehydratase (pheA).